A 288-amino-acid polypeptide reads, in one-letter code: MNELANRSFSKMNGIGNEIVVLDLRDHPVAVSAADARAIASEVPYDQLMVLQPPRTPGTEAFVRIYNNDGSESSACGNGMRCVARQVFATSASDALTFETRAGLLNCWRPAPNLYTVDMGPPKLGWKDIPLAEEFRDTRSIELQIGPIDAPVLHTPSVVSMGNPHAIFWVDDVNAHDLARFGPLLENHPIFPERANITLAQIVDRDHIVIRTWERGVGLTKACGSAACATAVAAARLRRVNRVVHITLPGGELGIEWRASDDHVLMTGPAAFEFEGRFDPAVFAAAAS.

Asn17, Gln47, and Asn67 together coordinate substrate. Catalysis depends on Cys76, which acts as the Proton donor. Substrate-binding positions include 77–78 (GN), Asn163, Asn196, and 214–215 (ER). Cys223 acts as the Proton acceptor in catalysis. Position 224–225 (224–225 (GS)) interacts with substrate.

This sequence belongs to the diaminopimelate epimerase family. Homodimer.

Its subcellular location is the cytoplasm. The enzyme catalyses (2S,6S)-2,6-diaminopimelate = meso-2,6-diaminopimelate. It functions in the pathway amino-acid biosynthesis; L-lysine biosynthesis via DAP pathway; DL-2,6-diaminopimelate from LL-2,6-diaminopimelate: step 1/1. Catalyzes the stereoinversion of LL-2,6-diaminopimelate (L,L-DAP) to meso-diaminopimelate (meso-DAP), a precursor of L-lysine and an essential component of the bacterial peptidoglycan. The chain is Diaminopimelate epimerase from Rhodopseudomonas palustris (strain BisB18).